We begin with the raw amino-acid sequence, 226 residues long: Small ribosomal subunit protein uS2c (226 aa).

Belongs to the universal ribosomal protein uS2 family.

It is found in the plastid. The protein localises to the chloroplast. This is Small ribosomal subunit protein uS2c (rps2) from Phaeodactylum tricornutum (strain CCAP 1055/1).